An 84-amino-acid chain; its full sequence is MTDKIRTLQGRVVSDKMEKSVVVAIDRMVKHPLYGKFIRRTTKLHVHDENNECGMGDVVEIRQTRPISKTKSWALVRVVEKAVL.

The protein belongs to the universal ribosomal protein uS17 family. In terms of assembly, part of the 30S ribosomal subunit.

Its function is as follows. One of the primary rRNA binding proteins, it binds specifically to the 5'-end of 16S ribosomal RNA. In Proteus mirabilis (strain HI4320), this protein is Small ribosomal subunit protein uS17.